Here is a 431-residue protein sequence, read N- to C-terminus: L-ornithine N(5)-monooxygenase (431 aa).

Residues Glu-40–His-48 and Gln-59 each bind FAD. Substrate is bound at residue Lys-64. NADP(+)-binding positions include Cys-202–Ser-205 and Arg-228. Substrate contacts are provided by residues Asn-242–Tyr-245 and Asn-273. Asn-273–Ser-275 serves as a coordination point for NADP(+). FAD is bound at residue Thr-399–Leu-401. Ser-402 is a substrate binding site.

The protein belongs to the lysine N(6)-hydroxylase/L-ornithine N(5)-oxygenase family. FAD is required as a cofactor.

The protein localises to the cytoplasm. It is found in the nucleus. The catalysed reaction is L-ornithine + NADPH + O2 = N(5)-hydroxy-L-ornithine + NADP(+) + H2O. It catalyses the reaction L-ornithine + NADH + O2 = N(5)-hydroxy-L-ornithine + NAD(+) + H2O. Its pathway is siderophore biosynthesis; ferrichrome biosynthesis. Functionally, catalyzes the conversion of L-ornithine to N(5)-hydroxyornithine, the first step in the biosynthesis of all hydroxamate-containing siderophores, such as ferrichrome. The polypeptide is L-ornithine N(5)-monooxygenase (Schizosaccharomyces pombe (strain 972 / ATCC 24843) (Fission yeast)).